Reading from the N-terminus, the 269-residue chain is MDILLLLKAFILGIIEGATEFLPISSTGHLIIVGDLLDFNDDKGKVFEIVIQLGAILAVCWEYRSRLISVATTLHTNTSQRFILNLFVAFLPAAIFGLLLHGFIKEHLFSSITVACALIVGGFAILLVENLYAHDKAPAAKASNLNEITPWQALKVGCAQSLAIMPGVSRSGATILGGMIFGLNRKTATEFSFFLAIPVMLAATFYDVYKNFSLFVFEDLAMFAVGFITAFLAALVAIKTLIRYVANHDFKGFAYYRIVLGIIVLAYYW.

A run of 6 helical transmembrane segments spans residues Lys43 to Tyr63, Phe82 to Gly102, Leu108 to Val128, Ala188 to Val208, Met222 to Ile242, and Asp249 to Trp269.

The protein belongs to the UppP family.

The protein localises to the cell inner membrane. The enzyme catalyses di-trans,octa-cis-undecaprenyl diphosphate + H2O = di-trans,octa-cis-undecaprenyl phosphate + phosphate + H(+). Functionally, catalyzes the dephosphorylation of undecaprenyl diphosphate (UPP). Confers resistance to bacitracin. This is Undecaprenyl-diphosphatase from Methylobacillus flagellatus (strain ATCC 51484 / DSM 6875 / VKM B-1610 / KT).